The chain runs to 169 residues: Cell division inhibitor SulA (169 aa).

The ftsZ binding stretch occupies residues 106 to 112; sequence ALRTGNY. Residues 162 to 169 form a lon protease binding region; sequence KIHSNLYH.

It belongs to the SulA family. Interacts with FtsZ. Post-translationally, is rapidly cleaved and degraded by the Lon protease once DNA damage is repaired.

Functionally, component of the SOS system and an inhibitor of cell division. Accumulation of SulA causes rapid cessation of cell division and the appearance of long, non-septate filaments. In the presence of GTP, binds a polymerization-competent form of FtsZ in a 1:1 ratio, thus inhibiting FtsZ polymerization and therefore preventing it from participating in the assembly of the Z ring. This mechanism prevents the premature segregation of damaged DNA to daughter cells during cell division. In Shigella flexneri serotype 5b (strain 8401), this protein is Cell division inhibitor SulA.